The primary structure comprises 238 residues: Probable transcriptional regulatory protein YeeN (238 aa).

The protein belongs to the TACO1 family. YeeN subfamily.

The protein resides in the cytoplasm. In Shigella flexneri, this protein is Probable transcriptional regulatory protein YeeN.